A 476-amino-acid chain; its full sequence is Aspartyl/glutamyl-tRNA(Asn/Gln) amidotransferase subunit B (476 aa).

Belongs to the GatB/GatE family. GatB subfamily. As to quaternary structure, heterotrimer of A, B and C subunits.

The enzyme catalyses L-glutamyl-tRNA(Gln) + L-glutamine + ATP + H2O = L-glutaminyl-tRNA(Gln) + L-glutamate + ADP + phosphate + H(+). It carries out the reaction L-aspartyl-tRNA(Asn) + L-glutamine + ATP + H2O = L-asparaginyl-tRNA(Asn) + L-glutamate + ADP + phosphate + 2 H(+). In terms of biological role, allows the formation of correctly charged Asn-tRNA(Asn) or Gln-tRNA(Gln) through the transamidation of misacylated Asp-tRNA(Asn) or Glu-tRNA(Gln) in organisms which lack either or both of asparaginyl-tRNA or glutaminyl-tRNA synthetases. The reaction takes place in the presence of glutamine and ATP through an activated phospho-Asp-tRNA(Asn) or phospho-Glu-tRNA(Gln). This Vesicomyosocius okutanii subsp. Calyptogena okutanii (strain HA) protein is Aspartyl/glutamyl-tRNA(Asn/Gln) amidotransferase subunit B.